The sequence spans 853 residues: Dynein axonemal assembly factor 5 (853 aa).

An N-acetylalanine modification is found at Ala2. HEAT repeat units follow at residues 69-107, 200-238, 240-276, 278-316, 374-412, 597-636, 694-732, 736-774, and 782-820; these read GPWARLLLPRLLRLLSDPAEGCRALAAHLLDLGLRRAAR, HMQSESLIGPLMQTISHQHWKVRVAVIEATGTVIQFGSG, SVDDVLSHFAQRLFDDVPQVRQAVTSVVGGWLLNLRD, YSFLHKLTPLLLSSFSDEMPEIRQTATSLWEKVGLQWQQ, RVKAAQLLPVLLLHAEDHITQHLEIVLRTLHQACTDEEK, GEALQHVIPTLRACLQPSTDPHMRLKLFSILSMMLLRPKD, QEAQETLMPQVLATLEDDSQTTRLMSCRIINMFLKNSGD, PEKFLKVYPELLKRLDDVSNDVRMAAASALLTWLKCIES, and QSSVQFLYRELLVHLDDPESAIQDTVLEVLKEGSVLFPD.

It belongs to the DNAAF5 family. In terms of assembly, interacts with DNAI2; probably involved in outer arm dynein assembly. Expressed in ciliated cells including ependymal cells lining the lateral ventricles and multiciliated epithelium of oviduct ampulla.

Its subcellular location is the cytoplasm. The protein localises to the cytoplasmic granule. Cytoplasmic protein involved in the delivery of the dynein machinery to the motile cilium. It is required for the assembly of the axonemal dynein inner and outer arms, two structures attached to the peripheral outer doublet A microtubule of the axoneme, that play a crucial role in cilium motility. This is Dynein axonemal assembly factor 5 from Mus musculus (Mouse).